A 549-amino-acid chain; its full sequence is Glucose-6-phosphate isomerase (549 aa).

E353 functions as the Proton donor in the catalytic mechanism. Residues H384 and K513 contribute to the active site.

It belongs to the GPI family.

Its subcellular location is the cytoplasm. It catalyses the reaction alpha-D-glucose 6-phosphate = beta-D-fructose 6-phosphate. Its pathway is carbohydrate biosynthesis; gluconeogenesis. The protein operates within carbohydrate degradation; glycolysis; D-glyceraldehyde 3-phosphate and glycerone phosphate from D-glucose: step 2/4. Catalyzes the reversible isomerization of glucose-6-phosphate to fructose-6-phosphate. In Brucella anthropi (strain ATCC 49188 / DSM 6882 / CCUG 24695 / JCM 21032 / LMG 3331 / NBRC 15819 / NCTC 12168 / Alc 37) (Ochrobactrum anthropi), this protein is Glucose-6-phosphate isomerase.